The primary structure comprises 37 residues: uncharacterized protein (37 aa).

The segment at 1–37 (MGQVEKARQGQFARPHHSDSQRRVRAWSRIQRRARSF) is disordered. The span at 23–37 (RVRAWSRIQRRARSF) shows a compositional bias: basic residues.

This is an uncharacterized protein from Bacillus phage phi105 (Bacteriophage phi-105).